The sequence spans 411 residues: NADH-quinone oxidoreductase subunit D (411 aa).

The protein belongs to the complex I 49 kDa subunit family. As to quaternary structure, NDH-1 is composed of 14 different subunits. Subunits NuoB, C, D, E, F, and G constitute the peripheral sector of the complex.

Its subcellular location is the cell inner membrane. It catalyses the reaction a quinone + NADH + 5 H(+)(in) = a quinol + NAD(+) + 4 H(+)(out). In terms of biological role, NDH-1 shuttles electrons from NADH, via FMN and iron-sulfur (Fe-S) centers, to quinones in the respiratory chain. The immediate electron acceptor for the enzyme in this species is believed to be ubiquinone. Couples the redox reaction to proton translocation (for every two electrons transferred, four hydrogen ions are translocated across the cytoplasmic membrane), and thus conserves the redox energy in a proton gradient. In Phenylobacterium zucineum (strain HLK1), this protein is NADH-quinone oxidoreductase subunit D.